A 494-amino-acid chain; its full sequence is 4-trimethylaminobutyraldehyde dehydrogenase (494 aa).

Position 2 is an N-acetylserine (serine 2). Lysine 30 carries the post-translational modification N6-acetyllysine; alternate. Lysine 30 is modified (N6-succinyllysine; alternate). Lysine 59 bears the N6-succinyllysine mark. NAD(+) is bound by residues lysine 180 and 232-236 (GSVPT). The active-site Proton acceptor is the glutamate 254. Cysteine 288 serves as the catalytic Nucleophile. Residues lysine 298 and lysine 344 each carry the N6-acetyllysine modification. An NAD(+)-binding site is contributed by glutamate 391.

It belongs to the aldehyde dehydrogenase family. As to quaternary structure, homotetramer.

It is found in the cytoplasm. The protein localises to the cytosol. It catalyses the reaction 4-(trimethylamino)butanal + NAD(+) + H2O = 4-(trimethylamino)butanoate + NADH + 2 H(+). The enzyme catalyses an aldehyde + NAD(+) + H2O = a carboxylate + NADH + 2 H(+). The catalysed reaction is 4-aminobutanal + NAD(+) + H2O = 4-aminobutanoate + NADH + 2 H(+). It carries out the reaction formaldehyde + NAD(+) + H2O = formate + NADH + 2 H(+). It catalyses the reaction acetaldehyde + NAD(+) + H2O = acetate + NADH + 2 H(+). The enzyme catalyses imidazole-4-acetaldehyde + NAD(+) + H2O = imidazole-4-acetate + NADH + 2 H(+). The catalysed reaction is acrolein + NAD(+) + H2O = acrylate + NADH + 2 H(+). It carries out the reaction (5-hydroxyindol-3-yl)acetaldehyde + NAD(+) + H2O = (5-hydroxyindol-3-yl)acetate + NADH + 2 H(+). It catalyses the reaction 3,4-dihydroxyphenylacetaldehyde + NAD(+) + H2O = 3,4-dihydroxyphenylacetate + NADH + 2 H(+). The enzyme catalyses spermine monoaldehyde + NAD(+) + H2O = N-(2-carboxyethyl)spermidine + NADH + 2 H(+). The catalysed reaction is propanal + NAD(+) + H2O = propanoate + NADH + 2 H(+). It carries out the reaction butanal + NAD(+) + H2O = butanoate + NADH + 2 H(+). It catalyses the reaction pentanal + NAD(+) + H2O = pentanoate + NADH + 2 H(+). The enzyme catalyses hexanal + NAD(+) + H2O = hexanoate + NADH + 2 H(+). Its pathway is amine and polyamine biosynthesis; carnitine biosynthesis. In terms of biological role, converts gamma-trimethylaminobutyraldehyde into gamma-butyrobetaine with high efficiency (in vitro). Can catalyze the irreversible oxidation of a broad range of aldehydes to the corresponding acids in an NAD-dependent reaction, but with low efficiency. Catalyzes the oxidation of aldehydes arising from biogenic amines and polyamines. This Bos taurus (Bovine) protein is 4-trimethylaminobutyraldehyde dehydrogenase (ALDH9A1).